The primary structure comprises 456 residues: Glycerol-3-phosphate acyltransferase 4 (456 aa).

Residues 1–37 (MFLLLPFDSLIVSLLGISLTVLFTLLLVFIIVPAVFG) form the signal peptide. 2 consecutive transmembrane segments (helical) span residues 156–176 (ISLRLTVLWGLGVLIRYCLLL) and 180–200 (IALAFTGISLLVVGTTMVGYL). The N-linked (GlcNAc...) asparagine glycan is linked to asparagine 247. The HXXXXD motif signature appears at 248-253 (HTSPID). Residues asparagine 327, asparagine 328, and asparagine 362 are each glycosylated (N-linked (GlcNAc...) asparagine).

This sequence belongs to the 1-acyl-sn-glycerol-3-phosphate acyltransferase family.

The protein resides in the endoplasmic reticulum membrane. The enzyme catalyses sn-glycerol 3-phosphate + an acyl-CoA = a 1-acyl-sn-glycero-3-phosphate + CoA. It carries out the reaction dodecanoyl-CoA + sn-glycerol 3-phosphate = 1-dodecanoyl-sn-glycerol 3-phosphate + CoA. The catalysed reaction is sn-glycerol 3-phosphate + hexadecanoyl-CoA = 1-hexadecanoyl-sn-glycero-3-phosphate + CoA. It catalyses the reaction sn-glycerol 3-phosphate + octadecanoyl-CoA = 1-octadecanoyl-sn-glycero-3-phosphate + CoA. The enzyme catalyses sn-glycerol 3-phosphate + (9Z)-octadecenoyl-CoA = 1-(9Z-octadecenoyl)-sn-glycero-3-phosphate + CoA. It carries out the reaction (9Z,12Z)-octadecadienoyl-CoA + sn-glycerol 3-phosphate = 1-(9Z,12Z)-octadecadienoyl-sn-glycero-3-phosphate + CoA. It participates in phospholipid metabolism; CDP-diacylglycerol biosynthesis; CDP-diacylglycerol from sn-glycerol 3-phosphate: step 1/3. Its function is as follows. Converts glycerol-3-phosphate to 1-acyl-sn-glycerol-3-phosphate (lysophosphatidic acid or LPA) by incorporating an acyl moiety at the sn-1 position of the glycerol backbone. Active against both saturated and unsaturated long-chain fatty acyl-CoAs. Protects cells against lipotoxicity. The sequence is that of Glycerol-3-phosphate acyltransferase 4 from Bos taurus (Bovine).